The primary structure comprises 215 residues: Cytochrome b6 (215 aa).

The helical transmembrane segment at 32–52 threads the bilayer; that stretch reads IFYCLGGITFTSFLVQVATGF. A heme c-binding site is contributed by Cys-35. Residues His-86 and His-100 each contribute to the heme b site. 3 consecutive transmembrane segments (helical) span residues 90-110, 116-136, and 186-206; these read ASMM…TGGF, LTWV…VTGY, and LHTF…FLMI. Heme b is bound by residues His-187 and His-202.

This sequence belongs to the cytochrome b family. PetB subfamily. As to quaternary structure, the 4 large subunits of the cytochrome b6-f complex are cytochrome b6, subunit IV (17 kDa polypeptide, PetD), cytochrome f and the Rieske protein, while the 4 small subunits are PetG, PetL, PetM and PetN. The complex functions as a dimer. It depends on heme b as a cofactor. The cofactor is heme c.

Its subcellular location is the plastid. It localises to the chloroplast thylakoid membrane. Functionally, component of the cytochrome b6-f complex, which mediates electron transfer between photosystem II (PSII) and photosystem I (PSI), cyclic electron flow around PSI, and state transitions. This is Cytochrome b6 from Oltmannsiellopsis viridis (Marine flagellate).